Here is a 426-residue protein sequence, read N- to C-terminus: Histidine--tRNA ligase (426 aa).

This sequence belongs to the class-II aminoacyl-tRNA synthetase family. Homodimer.

The protein localises to the cytoplasm. The catalysed reaction is tRNA(His) + L-histidine + ATP = L-histidyl-tRNA(His) + AMP + diphosphate + H(+). This is Histidine--tRNA ligase from Legionella pneumophila subsp. pneumophila (strain Philadelphia 1 / ATCC 33152 / DSM 7513).